The sequence spans 566 residues: ALBINO3-like protein 3, mitochondrial (566 aa).

The transit peptide at 1–44 directs the protein to the mitochondrion; that stretch reads MAFRRVLLSHLRRSHHTCSSLSPHHVSATTQPSIALALFQSRFF. 4 helical membrane-spanning segments follow: residues 139–159, 207–227, 249–269, and 301–321; these read WVVI…ILIL, LWVP…ITSI, LTEI…AGLH, and LLTC…LLYW. TPR repeat units lie at residues 386–419, 420–453, 465–498, and 507–540; these read PKEL…DPEY, LQAM…LLDT, IVAS…KEPD, and LDAL…DPSF. Residues 547–566 are disordered; it reads CEEDDTIPTSSSSNSTSKTS. Positions 555-566 are enriched in low complexity; it reads TSSSSNSTSKTS.

It belongs to the OXA1/ALB3/YidC (TC 2.A.9.2) family.

The protein resides in the mitochondrion inner membrane. Probably required for the insertion of integral membrane proteins into the mitochondrial inner membrane. This chain is ALBINO3-like protein 3, mitochondrial (ALB3L3), found in Arabidopsis thaliana (Mouse-ear cress).